The sequence spans 202 residues: Protein TIFY 11g (202 aa).

Residues 1–11 (MDAVGAAGGGA) show a composition bias toward gly residues. The tract at residues 1-31 (MDAVGAAGGGAMLPAAARRGQPPQPPCMTTA) is disordered. Low complexity predominate over residues 12–21 (MLPAAARRGQ). The Tify domain maps to 101–136 (ATAPTAPLTIVYGGQVLVFEHYTAEAAEKLVQRTQH). The Jas signature appears at 185–200 (PIARKASLQRFLQKRK). A Nuclear localization signal motif is present at residues 187 to 194 (ARKASLQR).

This sequence belongs to the TIFY/JAZ family. In terms of processing, ubiquitinated. Targeted for degradation by the SCF(COI1) E3 ubiquitin ligase-proteasome pathway during jasmonate signaling.

It localises to the nucleus. Its function is as follows. Repressor of jasmonate responses. This Oryza sativa subsp. japonica (Rice) protein is Protein TIFY 11g.